The primary structure comprises 692 residues: Elongation factor G (692 aa).

The 275-residue stretch at 8–282 (EKTRNIGIMA…AIVDYLPAPT (275 aa)) folds into the tr-type G domain. GTP is bound by residues 17–24 (AHIDAGKT), 81–85 (DTPGH), and 135–138 (NKMD).

The protein belongs to the TRAFAC class translation factor GTPase superfamily. Classic translation factor GTPase family. EF-G/EF-2 subfamily.

It is found in the cytoplasm. Its function is as follows. Catalyzes the GTP-dependent ribosomal translocation step during translation elongation. During this step, the ribosome changes from the pre-translocational (PRE) to the post-translocational (POST) state as the newly formed A-site-bound peptidyl-tRNA and P-site-bound deacylated tRNA move to the P and E sites, respectively. Catalyzes the coordinated movement of the two tRNA molecules, the mRNA and conformational changes in the ribosome. This chain is Elongation factor G, found in Pelotomaculum thermopropionicum (strain DSM 13744 / JCM 10971 / SI).